A 358-amino-acid polypeptide reads, in one-letter code: Phospho-N-acetylmuramoyl-pentapeptide-transferase (358 aa).

10 consecutive transmembrane segments (helical) span residues 13-47, 81-101, 106-126, 148-168, 171-191, 201-221, 228-248, 255-275, 278-298, and 336-356; these read LFIL…SIFI, MGGI…TINL, LILL…DDYL, ISII…LITI, SWAI…LVGI, LDGL…TEIL, LFVF…FLKY, IFMG…IALL, SIFT…SVII, and IVEN…VLKI.

Belongs to the glycosyltransferase 4 family. MraY subfamily. It depends on Mg(2+) as a cofactor.

It is found in the cell inner membrane. It catalyses the reaction UDP-N-acetyl-alpha-D-muramoyl-L-alanyl-gamma-D-glutamyl-meso-2,6-diaminopimeloyl-D-alanyl-D-alanine + di-trans,octa-cis-undecaprenyl phosphate = di-trans,octa-cis-undecaprenyl diphospho-N-acetyl-alpha-D-muramoyl-L-alanyl-D-glutamyl-meso-2,6-diaminopimeloyl-D-alanyl-D-alanine + UMP. It functions in the pathway cell wall biogenesis; peptidoglycan biosynthesis. In terms of biological role, catalyzes the initial step of the lipid cycle reactions in the biosynthesis of the cell wall peptidoglycan: transfers peptidoglycan precursor phospho-MurNAc-pentapeptide from UDP-MurNAc-pentapeptide onto the lipid carrier undecaprenyl phosphate, yielding undecaprenyl-pyrophosphoryl-MurNAc-pentapeptide, known as lipid I. This Prochlorococcus marinus (strain MIT 9301) protein is Phospho-N-acetylmuramoyl-pentapeptide-transferase.